The following is a 335-amino-acid chain: Transcriptional coactivator YAP1-B (335 aa).

The span at 1-13 shows a compositional bias: low complexity; it reads MEPGSQQQPSAPG. Residues 1–21 are disordered; the sequence is MEPGSQQQPSAPGQQPPPVGH. Residue S30 is modified to Phosphoserine; by LATS1 and LATS2. Positions 114–124 are enriched in polar residues; that stretch reads MNQQRLSQSAP. Positions 114 to 146 are disordered; that stretch reads MNQQRLSQSAPVKSPPALQPQSPPSGVLGSGGN. The segment covering 126–136 has biased composition (pro residues); it reads KSPPALQPQSP. Residues 137–335 are transactivation domain; sequence PSGVLGSGGN…LDKESFLTWL (199 aa). Positions 145 to 173 form a coiled coil; sequence GNQQMRLQQLQMEKERLRLKHQELLRQVR.

It belongs to the YAP1 family. Post-translationally, phosphorylated by lats1 and lats2; leading to cytoplasmic translocation and inactivation.

It is found in the cytoplasm. The protein resides in the nucleus. Its subcellular location is the cell junction. The protein localises to the tight junction. It localises to the cell membrane. Its function is as follows. Transcriptional regulator which can act both as a coactivator and a corepressor and is the critical downstream regulatory target in the Hippo signaling pathway that plays a pivotal role in organ size control and tumor suppression by restricting proliferation and promoting apoptosis. Plays a key role in tissue tension and 3D tissue shape by regulating cortical actomyosin network formation. The protein is Transcriptional coactivator YAP1-B of Xenopus laevis (African clawed frog).